The following is a 322-amino-acid chain: Phosphatidylglycerol--prolipoprotein diacylglyceryl transferase (322 aa).

The next 4 membrane-spanning stretches (helical) occupy residues 21–41 (PLPI…AIWL), 50–70 (GGNP…GIIG), 98–118 (NGGL…WAYF), and 123–143 (IPLA…QAIG). Residue arginine 144 coordinates a 1,2-diacyl-sn-glycero-3-phospho-(1'-sn-glycerol). Transmembrane regions (helical) follow at residues 191–211 (VHPT…LLIW) and 254–274 (INTL…LRLG). The interval 283-322 (VDPAYHAAQAERDDTETAGLDATTGTVPGDSPETTGKKRK) is disordered.

The protein belongs to the Lgt family.

Its subcellular location is the cell membrane. The enzyme catalyses L-cysteinyl-[prolipoprotein] + a 1,2-diacyl-sn-glycero-3-phospho-(1'-sn-glycerol) = an S-1,2-diacyl-sn-glyceryl-L-cysteinyl-[prolipoprotein] + sn-glycerol 1-phosphate + H(+). The protein operates within protein modification; lipoprotein biosynthesis (diacylglyceryl transfer). Functionally, catalyzes the transfer of the diacylglyceryl group from phosphatidylglycerol to the sulfhydryl group of the N-terminal cysteine of a prolipoprotein, the first step in the formation of mature lipoproteins. The polypeptide is Phosphatidylglycerol--prolipoprotein diacylglyceryl transferase (Corynebacterium efficiens (strain DSM 44549 / YS-314 / AJ 12310 / JCM 11189 / NBRC 100395)).